The following is a 344-amino-acid chain: Ferredoxin--NADP reductase (344 aa).

Positions 12, 31, 39, 43, 83, 118, 285, and 326 each coordinate FAD.

Belongs to the ferredoxin--NADP reductase type 2 family. As to quaternary structure, homodimer. FAD serves as cofactor.

It catalyses the reaction 2 reduced [2Fe-2S]-[ferredoxin] + NADP(+) + H(+) = 2 oxidized [2Fe-2S]-[ferredoxin] + NADPH. This is Ferredoxin--NADP reductase from Staphylococcus aureus (strain JH1).